Here is a 249-residue protein sequence, read N- to C-terminus: Small ribosomal subunit protein uS2 (249 aa).

Belongs to the universal ribosomal protein uS2 family.

The protein is Small ribosomal subunit protein uS2 of Bordetella parapertussis (strain 12822 / ATCC BAA-587 / NCTC 13253).